The primary structure comprises 317 residues: UDP-3-O-acylglucosamine N-acyltransferase (317 aa).

Histidine 229 serves as the catalytic Proton acceptor.

The protein belongs to the transferase hexapeptide repeat family. LpxD subfamily. As to quaternary structure, homotrimer.

The catalysed reaction is a UDP-3-O-[(3R)-3-hydroxyacyl]-alpha-D-glucosamine + a (3R)-hydroxyacyl-[ACP] = a UDP-2-N,3-O-bis[(3R)-3-hydroxyacyl]-alpha-D-glucosamine + holo-[ACP] + H(+). The protein operates within bacterial outer membrane biogenesis; LPS lipid A biosynthesis. Functionally, catalyzes the N-acylation of UDP-3-O-acylglucosamine using 3-hydroxyacyl-ACP as the acyl donor. Is involved in the biosynthesis of lipid A, a phosphorylated glycolipid that anchors the lipopolysaccharide to the outer membrane of the cell. The sequence is that of UDP-3-O-acylglucosamine N-acyltransferase from Campylobacter concisus (strain 13826).